Consider the following 234-residue polypeptide: Small ribosomal subunit protein uS3 (234 aa).

The KH type-2 domain occupies 39–107; sequence VRKFLNKELA…PAQINIAEVK (69 aa).

It belongs to the universal ribosomal protein uS3 family. Part of the 30S ribosomal subunit. Forms a tight complex with proteins S10 and S14.

Binds the lower part of the 30S subunit head. Binds mRNA in the 70S ribosome, positioning it for translation. The sequence is that of Small ribosomal subunit protein uS3 from Haemophilus ducreyi (strain 35000HP / ATCC 700724).